Here is a 382-residue protein sequence, read N- to C-terminus: Nitric oxide reductase FlRd-NAD(+) reductase (382 aa).

This sequence belongs to the FAD-dependent oxidoreductase family. FAD is required as a cofactor.

Its subcellular location is the cytoplasm. The catalysed reaction is 2 reduced [nitric oxide reductase rubredoxin domain] + NAD(+) + H(+) = 2 oxidized [nitric oxide reductase rubredoxin domain] + NADH. Its pathway is nitrogen metabolism; nitric oxide reduction. In terms of biological role, one of at least two accessory proteins for anaerobic nitric oxide (NO) reductase. Reduces the rubredoxin moiety of NO reductase. The chain is Nitric oxide reductase FlRd-NAD(+) reductase from Vibrio vulnificus (strain YJ016).